Consider the following 259-residue polypeptide: Synaptophysin-like protein 1 (259 aa).

The Cytoplasmic segment spans residues 1–33 (MAPNIYLVRQRISRLGQRMSGFQINLNPLKEPL). The 210-residue stretch at 28-237 (PLKEPLGFIK…NAWFVYKETS (210 aa)) folds into the MARVEL domain. Residues 34-54 (GFIKVLEWIASIFAFATCGGF) form a helical membrane-spanning segment. At 55-116 (KGQTEIQVNC…LIGDYSSSAQ (62 aa)) the chain is on the vesicular side. N-linked (GlcNAc...) asparagine glycosylation occurs at N71. The helical transmembrane segment at 117-137 (FYVTFAVFVFLYCIAALLLYV) threads the bilayer. Residues 138–150 (GYTSLYLDSRKLP) are Cytoplasmic-facing. The helical transmembrane segment at 151 to 171 (MIDFVVTLVATFLWLVSTSAW) threads the bilayer. Topologically, residues 172–212 (AKALTDIKIATGHNIIDELPPCKKKAVLCYFGSVTSMGSLN) are vesicular. Residue N212 is glycosylated (N-linked (GlcNAc...) asparagine). The helical transmembrane segment at 213 to 233 (VSVIFGFLNMILWGGNAWFVY) threads the bilayer. Over 234–259 (KETSLHSPSNTSAPHSQGGIPPPTGI) the chain is Cytoplasmic.

Belongs to the synaptophysin/synaptobrevin family.

Its subcellular location is the cytoplasmic vesicle membrane. It localises to the melanosome. This is Synaptophysin-like protein 1 (SYPL1) from Homo sapiens (Human).